Consider the following 139-residue polypeptide: Nucleoside diphosphate kinase (139 aa).

Residues Lys-9, Phe-57, Arg-85, Thr-91, Arg-102, and Asn-112 each contribute to the ATP site. Catalysis depends on His-115, which acts as the Pros-phosphohistidine intermediate.

This sequence belongs to the NDK family. As to quaternary structure, homotetramer. Mg(2+) is required as a cofactor.

The protein localises to the cytoplasm. It catalyses the reaction a 2'-deoxyribonucleoside 5'-diphosphate + ATP = a 2'-deoxyribonucleoside 5'-triphosphate + ADP. The catalysed reaction is a ribonucleoside 5'-diphosphate + ATP = a ribonucleoside 5'-triphosphate + ADP. In terms of biological role, major role in the synthesis of nucleoside triphosphates other than ATP. The ATP gamma phosphate is transferred to the NDP beta phosphate via a ping-pong mechanism, using a phosphorylated active-site intermediate. This Desulfosudis oleivorans (strain DSM 6200 / JCM 39069 / Hxd3) (Desulfococcus oleovorans) protein is Nucleoside diphosphate kinase.